Here is a 283-residue protein sequence, read N- to C-terminus: Protein/nucleic acid deglycase HchA (283 aa).

Histidine 86, glutamate 91, and histidine 123 together coordinate Zn(2+). The active-site Nucleophile is the cysteine 185.

It belongs to the peptidase C56 family. HchA subfamily. As to quaternary structure, homodimer.

It localises to the cytoplasm. It catalyses the reaction N(omega)-(1-hydroxy-2-oxopropyl)-L-arginyl-[protein] + H2O = lactate + L-arginyl-[protein] + H(+). It carries out the reaction N(6)-(1-hydroxy-2-oxopropyl)-L-lysyl-[protein] + H2O = lactate + L-lysyl-[protein] + H(+). The catalysed reaction is S-(1-hydroxy-2-oxopropyl)-L-cysteinyl-[protein] + H2O = lactate + L-cysteinyl-[protein] + H(+). The enzyme catalyses N(omega)-(1-hydroxy-2-oxoethyl)-L-arginyl-[protein] + H2O = L-arginyl-[protein] + glycolate + H(+). It catalyses the reaction N(6)-(1-hydroxy-2-oxoethyl)-L-lysyl-[protein] + H2O = glycolate + L-lysyl-[protein] + H(+). It carries out the reaction S-(1-hydroxy-2-oxoethyl)-L-cysteinyl-[protein] + H2O = glycolate + L-cysteinyl-[protein] + H(+). The catalysed reaction is N(2)-(1-hydroxy-2-oxopropyl)-dGTP + H2O = lactate + dGTP + H(+). The enzyme catalyses N(2)-(1-hydroxy-2-oxopropyl)-GTP + H2O = lactate + GTP + H(+). It catalyses the reaction N(2)-(1-hydroxy-2-oxopropyl)-GDP + H2O = lactate + GDP + H(+). It carries out the reaction N(2)-(1-hydroxy-2-oxopropyl)-GMP + H2O = lactate + GMP + H(+). The catalysed reaction is N(2)-(1-hydroxy-2-oxoethyl)-dGTP + H2O = dGTP + glycolate + H(+). The enzyme catalyses N(2)-(1-hydroxy-2-oxoethyl)-GTP + H2O = glycolate + GTP + H(+). It catalyses the reaction N(2)-(1-hydroxy-2-oxoethyl)-GDP + H2O = glycolate + GDP + H(+). It carries out the reaction N(2)-(1-hydroxy-2-oxoethyl)-GMP + H2O = glycolate + GMP + H(+). The catalysed reaction is an N(2)-(1-hydroxy-2-oxopropyl)-guanosine in RNA + H2O = a guanosine in RNA + lactate + H(+). The enzyme catalyses an N(2)-(1-hydroxy-2-oxopropyl)-2'-deoxyguanosine in DNA + H2O = a 2'-deoxyguanosine in DNA + lactate + H(+). It catalyses the reaction an N(2)-(1-hydroxy-2-oxoethyl)-guanosine in RNA + H2O = a guanosine in RNA + glycolate + H(+). It carries out the reaction an N(2)-(1-hydroxy-2-oxoethyl)-2'-deoxyguanosine in DNA + H2O = a 2'-deoxyguanosine in DNA + glycolate + H(+). Protein and nucleotide deglycase that catalyzes the deglycation of the Maillard adducts formed between amino groups of proteins or nucleotides and reactive carbonyl groups of glyoxals. Thus, functions as a protein deglycase that repairs methylglyoxal- and glyoxal-glycated proteins, and releases repaired proteins and lactate or glycolate, respectively. Deglycates cysteine, arginine and lysine residues in proteins, and thus reactivates these proteins by reversing glycation by glyoxals. Acts on early glycation intermediates (hemithioacetals and aminocarbinols), preventing the formation of Schiff bases and advanced glycation endproducts (AGE). Also functions as a nucleotide deglycase able to repair glycated guanine in the free nucleotide pool (GTP, GDP, GMP, dGTP) and in DNA and RNA. Is thus involved in a major nucleotide repair system named guanine glycation repair (GG repair), dedicated to reversing methylglyoxal and glyoxal damage via nucleotide sanitization and direct nucleic acid repair. Plays an important role in protecting cells from carbonyl stress. In Escherichia coli O7:K1 (strain IAI39 / ExPEC), this protein is Protein/nucleic acid deglycase HchA.